We begin with the raw amino-acid sequence, 293 residues long: 4-diphosphocytidyl-2-C-methyl-D-erythritol kinase (293 aa).

The active site involves lysine 16. Residue 99–109 (PMGAGLGGGSS) participates in ATP binding. Residue aspartate 141 is part of the active site.

The protein belongs to the GHMP kinase family. IspE subfamily.

The catalysed reaction is 4-CDP-2-C-methyl-D-erythritol + ATP = 4-CDP-2-C-methyl-D-erythritol 2-phosphate + ADP + H(+). Its pathway is isoprenoid biosynthesis; isopentenyl diphosphate biosynthesis via DXP pathway; isopentenyl diphosphate from 1-deoxy-D-xylulose 5-phosphate: step 3/6. In terms of biological role, catalyzes the phosphorylation of the position 2 hydroxy group of 4-diphosphocytidyl-2C-methyl-D-erythritol. In Burkholderia pseudomallei (strain 668), this protein is 4-diphosphocytidyl-2-C-methyl-D-erythritol kinase.